A 584-amino-acid chain; its full sequence is Tricyclene synthase 1e20, chloroplastic (584 aa).

The transit peptide at 1-45 (MIYIWICFYLQTTLLPCSLSTRTKFAICHNTSKLHRAAYKTSRWN) directs the protein to the chloroplast. N-linked (GlcNAc...) asparagine glycosylation is found at Asn-30, Asn-209, and Asn-322. Mg(2+)-binding residues include Asp-341 and Asp-345. Positions 341–345 (DDIFD) match the DDXXD motif motif. 2 N-linked (GlcNAc...) asparagine glycosylation sites follow: Asn-387 and Asn-468. Positions 485, 489, and 493 each coordinate Mg(2+). A glycan (N-linked (GlcNAc...) asparagine) is linked at Asn-512.

It belongs to the terpene synthase family. Tpsg subfamily. It depends on Mg(2+) as a cofactor. Requires Mn(2+) as cofactor. Accumulates at low levels in flowers; mostly expressed in both upper and lower petal lobes, and, to a lower extent, in tube and stamens.

It localises to the plastid. It is found in the chloroplast stroma. The enzyme catalyses (2E)-geranyl diphosphate = tricyclene + diphosphate. The catalysed reaction is (2E)-geranyl diphosphate = beta-myrcene + diphosphate. Its pathway is secondary metabolite biosynthesis; terpenoid biosynthesis. Its function is as follows. May contribute to floral scent emission. In Antirrhinum majus (Garden snapdragon), this protein is Tricyclene synthase 1e20, chloroplastic (1e20).